Reading from the N-terminus, the 336-residue chain is MNILLTGGGTGGHLAIAKALMESLASKNQSLFFIGSQRGQDRSWFEHEEGFKRRFFLETQGVVNQRGIAKIRSLSSQFQAMLEARKILKNHQIKRVVSVGGYSAAPASLAALSLGIPLYIHEQNAKVGLLNRLLKPFSRAFLSSYDSNSLIRDYPVRDAFFEVARVRSRVKKILFLGGSQGAKAINDWALELAPLIHQRGIAIMHQCGEVDYERMKRGYEERSIPVELFAFDRAIHQKMQQADLAISRAGASSLWELGANGLPALFIPYPFAAGDHQYYNAKFILDQGLGWMVRQENLSTEVLLEILEEDLSQKSECLMAYVKRGAADRMADFILS.

UDP-N-acetyl-alpha-D-glucosamine is bound by residues 10–12 (TGG), asparagine 124, arginine 157, serine 179, and glutamine 277.

This sequence belongs to the glycosyltransferase 28 family. MurG subfamily.

It is found in the cell inner membrane. The catalysed reaction is di-trans,octa-cis-undecaprenyl diphospho-N-acetyl-alpha-D-muramoyl-L-alanyl-D-glutamyl-meso-2,6-diaminopimeloyl-D-alanyl-D-alanine + UDP-N-acetyl-alpha-D-glucosamine = di-trans,octa-cis-undecaprenyl diphospho-[N-acetyl-alpha-D-glucosaminyl-(1-&gt;4)]-N-acetyl-alpha-D-muramoyl-L-alanyl-D-glutamyl-meso-2,6-diaminopimeloyl-D-alanyl-D-alanine + UDP + H(+). The protein operates within cell wall biogenesis; peptidoglycan biosynthesis. Functionally, cell wall formation. Catalyzes the transfer of a GlcNAc subunit on undecaprenyl-pyrophosphoryl-MurNAc-pentapeptide (lipid intermediate I) to form undecaprenyl-pyrophosphoryl-MurNAc-(pentapeptide)GlcNAc (lipid intermediate II). The sequence is that of UDP-N-acetylglucosamine--N-acetylmuramyl-(pentapeptide) pyrophosphoryl-undecaprenol N-acetylglucosamine transferase from Wolinella succinogenes (strain ATCC 29543 / DSM 1740 / CCUG 13145 / JCM 31913 / LMG 7466 / NCTC 11488 / FDC 602W) (Vibrio succinogenes).